A 397-amino-acid chain; its full sequence is Tryptophan synthase beta chain (397 aa).

Lys91 bears the N6-(pyridoxal phosphate)lysine mark.

Belongs to the TrpB family. As to quaternary structure, tetramer of two alpha and two beta chains. It depends on pyridoxal 5'-phosphate as a cofactor.

The catalysed reaction is (1S,2R)-1-C-(indol-3-yl)glycerol 3-phosphate + L-serine = D-glyceraldehyde 3-phosphate + L-tryptophan + H2O. Its pathway is amino-acid biosynthesis; L-tryptophan biosynthesis; L-tryptophan from chorismate: step 5/5. Functionally, the beta subunit is responsible for the synthesis of L-tryptophan from indole and L-serine. This is Tryptophan synthase beta chain from Bacillus cereus (strain Q1).